The sequence spans 256 residues: uncharacterized protein (256 aa).

2 disordered regions span residues 1 to 171 (MARG…QLKH) and 185 to 256 (NGQR…LYND). Residues 14–39 (KRRSKVQEEEEHVEGSEEEVEEPEQK) are a coiled coil. Acidic residues-rich tracts occupy residues 21–35 (EEEE…EVEE) and 64–92 (SDDD…DNDE). Residues 108–129 (NRGDHESHDDNSDNEEQGDRGN) show a composition bias toward basic and acidic residues. Gly residues predominate over residues 192–205 (KRGGPPRGSFGQRG). Positions 219-234 (RQGDTRDTRDTRDTRL) are enriched in basic and acidic residues.

This is an uncharacterized protein from Acanthamoeba polyphaga (Amoeba).